Here is a 127-residue protein sequence, read N- to C-terminus: NHP2-like protein 1 homolog (127 aa).

This sequence belongs to the eukaryotic ribosomal protein eL8 family.

It is found in the nucleus. The protein resides in the nucleolus. Binds to the 5'-stem-loop of U4 snRNA and may play a role in the late stage of spliceosome assembly. The protein undergoes a conformational change upon RNA-binding. In Drosophila melanogaster (Fruit fly), this protein is NHP2-like protein 1 homolog (hoip).